A 255-amino-acid polypeptide reads, in one-letter code: Urease accessory protein UreD 1 (255 aa).

Belongs to the UreD family. UreD, UreF and UreG form a complex that acts as a GTP-hydrolysis-dependent molecular chaperone, activating the urease apoprotein by helping to assemble the nickel containing metallocenter of UreC. The UreE protein probably delivers the nickel.

It is found in the cytoplasm. Required for maturation of urease via the functional incorporation of the urease nickel metallocenter. The chain is Urease accessory protein UreD 1 from Saccharopolyspora erythraea (strain ATCC 11635 / DSM 40517 / JCM 4748 / NBRC 13426 / NCIMB 8594 / NRRL 2338).